Consider the following 435-residue polypeptide: Probable histidine--tRNA ligase, cytoplasmic (435 aa).

The protein belongs to the class-II aminoacyl-tRNA synthetase family.

It localises to the cytoplasm. The catalysed reaction is tRNA(His) + L-histidine + ATP = L-histidyl-tRNA(His) + AMP + diphosphate + H(+). The polypeptide is Probable histidine--tRNA ligase, cytoplasmic (Encephalitozoon cuniculi (strain GB-M1) (Microsporidian parasite)).